Here is a 1489-residue protein sequence, read N- to C-terminus: ABC transporter FUM19 (1489 aa).

Helical transmembrane passes span 33–53, 84–104, 116–136, 143–163, 264–284, 302–322, 373–393, 397–417, 482–502, and 511–531; these read IIFF…RIFV, CFSS…ALSY, LLSI…RTLW, LEYG…FAVW, LLLP…QAFL, WGLI…TSLY, FLNL…AWFL, VGIA…GVSI, IASL…MLAA, and HKVY…GSIF. Residues 272 to 539 enclose the ABC transmembrane type-1 1 domain; the sequence is IALIGLSLAQ…IFRSVSPLMS (268 aa). Residues 591–823 enclose the ABC transporter 1 domain; sequence VKVIQASFGW…YQSHLQSLCI (233 aa). 2 N-linked (GlcNAc...) asparagine glycosylation sites follow: N612 and N616. 625–632 contacts ATP; that stretch reads GPVGSGKS. An N-linked (GlcNAc...) asparagine glycan is attached at N670. The span at 852–862 shows a compositional bias: basic and acidic residues; the sequence is EQTRSSRRGAD. The tract at residues 852-874 is disordered; that stretch reads EQTRSSRRGADNQETIASGADSS. A compositionally biased stretch (polar residues) spans 863-874; it reads NQETIASGADSS. Transmembrane regions (helical) follow at residues 890 to 910, 945 to 965, 977 to 999, 1031 to 1051, 1120 to 1140, and 1149 to 1169; these read AVPP…GFLY, ILAL…FALI, AITR…NYFS, AASS…LYFV, WLLF…VALV, and GFAG…TNVV. An ABC transmembrane type-1 2 domain is found at 902 to 1187; sequence SSLSYGFLYS…SMGAVSRLKA (286 aa). Positions 1214 to 1485 constitute an ABC transporter 2 domain; it reads IKIDGVSASY…KEGKFRALWE (272 aa). 1254–1261 is an ATP binding site; that stretch reads GRTGSGKS.

This sequence belongs to the ABC transporter superfamily. ABCC family. Conjugate transporter (TC 3.A.1.208) subfamily.

Its subcellular location is the cell membrane. Functionally, ABC transporter that may provide the dual role of fumonisin export and self-protection by allowing the fungus to evade the harmful effect of its own fumonisin production. Plays a role in the repression of the gene cluster that mediates fumonisin biosynthesis. The sequence is that of ABC transporter FUM19 from Gibberella moniliformis (strain M3125 / FGSC 7600) (Maize ear and stalk rot fungus).